Consider the following 537-residue polypeptide: Multidrug resistance protein Stp (537 aa).

14 helical membrane passes run 6–26 (LLTL…ALIV), 46–66 (WVVA…ATLA), 77–97 (IGVS…SIAV), 104–124 (AQGL…SAAF), 136–156 (IWTA…GLLV), 163–183 (SIFY…LCYV), 200–220 (LLFI…PQIG), 223–243 (SVQT…FVWL), 262–282 (YALA…MLLL), 300–320 (LMIL…GHLV), 327–347 (VPIL…IFSE), 352–372 (ALVL…LTPI), 397–417 (AIGS…WLSA), and 478–498 (VALL…WRWF).

It belongs to the major facilitator superfamily. EmrB family.

The protein resides in the cell membrane. In terms of biological role, contributes to spectinomycin and tetracycline resistance. In Mycobacterium tuberculosis (strain ATCC 25618 / H37Rv), this protein is Multidrug resistance protein Stp (stp).